We begin with the raw amino-acid sequence, 83 residues long: RNA-binding protein Hfq (83 aa).

Positions 10 to 69 constitute a Sm domain; it reads DPFLNALRREHVPVSIYLVNGIKLQGQIESFDQYVVLLRNTVTQMVYKHAISTIVPGRAV.

The protein belongs to the Hfq family. Homohexamer.

RNA chaperone that binds small regulatory RNA (sRNAs) and mRNAs to facilitate mRNA translational regulation in response to envelope stress, environmental stress and changes in metabolite concentrations. Also binds with high specificity to tRNAs. The sequence is that of RNA-binding protein Hfq from Paracidovorax citrulli (strain AAC00-1) (Acidovorax citrulli).